The following is a 419-amino-acid chain: UDP-N-acetylglucosamine 1-carboxyvinyltransferase 2 (419 aa).

22-23 (KN) contributes to the phosphoenolpyruvate binding site. R92 contacts UDP-N-acetyl-alpha-D-glucosamine. C116 serves as the catalytic Proton donor. C116 is modified (2-(S-cysteinyl)pyruvic acid O-phosphothioketal). Residues 121-125 (RPIDL), D306, and I328 contribute to the UDP-N-acetyl-alpha-D-glucosamine site.

This sequence belongs to the EPSP synthase family. MurA subfamily.

Its subcellular location is the cytoplasm. The enzyme catalyses phosphoenolpyruvate + UDP-N-acetyl-alpha-D-glucosamine = UDP-N-acetyl-3-O-(1-carboxyvinyl)-alpha-D-glucosamine + phosphate. It functions in the pathway cell wall biogenesis; peptidoglycan biosynthesis. Cell wall formation. Adds enolpyruvyl to UDP-N-acetylglucosamine. The protein is UDP-N-acetylglucosamine 1-carboxyvinyltransferase 2 of Streptococcus pyogenes serotype M1.